We begin with the raw amino-acid sequence, 154 residues long: MPVLQIRKIGDPVLRSKAKPVTEITKKTLSLIDNMVETMYQAEGVGLAAPQVGVSKRIIVVDTGEGQGLIELINPEIIETEGKDIMEEGCLSVPGQTGKVIRASKVTVKGLNRGGKEVRIRAEGFLARAFQHEIDHLNGILFIDKVVRIGEEMI.

Fe cation-binding residues include C90 and H132. The active site involves E133. Residue H136 coordinates Fe cation.

Belongs to the polypeptide deformylase family. Requires Fe(2+) as cofactor.

The catalysed reaction is N-terminal N-formyl-L-methionyl-[peptide] + H2O = N-terminal L-methionyl-[peptide] + formate. Removes the formyl group from the N-terminal Met of newly synthesized proteins. Requires at least a dipeptide for an efficient rate of reaction. N-terminal L-methionine is a prerequisite for activity but the enzyme has broad specificity at other positions. The chain is Peptide deformylase from Halothermothrix orenii (strain H 168 / OCM 544 / DSM 9562).